Reading from the N-terminus, the 466-residue chain is Glutamate decarboxylase (466 aa).

An N6-(pyridoxal phosphate)lysine modification is found at K277.

It belongs to the group II decarboxylase family. Pyridoxal 5'-phosphate serves as cofactor.

The catalysed reaction is L-glutamate + H(+) = 4-aminobutanoate + CO2. Converts internalized glutamate to GABA and increases the internal pH. Involved in glutamate-dependent acid resistance. The chain is Glutamate decarboxylase (gadB) from Lactococcus lactis subsp. cremoris (strain MG1363).